The chain runs to 447 residues: 26S proteasome non-ATPase regulatory subunit 12 (447 aa).

The disordered stretch occupies residues 1-23 (MTIGLEPAVSSKTKDKMEQDLSP). A PCI domain is found at 240-411 (NYIEIARCYL…GIATFTTTND (172 aa)).

It belongs to the proteasome subunit p55 family.

Acts as a regulatory subunit of the 26S proteasome which is involved in the ATP-dependent degradation of ubiquitinated proteins. The chain is 26S proteasome non-ATPase regulatory subunit 12 (psmD12) from Dictyostelium discoideum (Social amoeba).